We begin with the raw amino-acid sequence, 45 residues long: Defensin Tk-AMP-D3 (45 aa).

Intrachain disulfides connect cysteine 3-cysteine 45, cysteine 14-cysteine 34, cysteine 20-cysteine 39, and cysteine 24-cysteine 41.

Its function is as follows. Plant defense peptide. This Triticum kiharae (Wheat) protein is Defensin Tk-AMP-D3.